A 619-amino-acid chain; its full sequence is 1-deoxy-D-xylulose-5-phosphate synthase (619 aa).

Thiamine diphosphate-binding positions include histidine 74 and 115-117 (GHS). Aspartate 146 is a Mg(2+) binding site. Residues 147–148 (GA), asparagine 175, tyrosine 285, and glutamate 365 each bind thiamine diphosphate. Residue asparagine 175 participates in Mg(2+) binding.

It belongs to the transketolase family. DXPS subfamily. Homodimer. Requires Mg(2+) as cofactor. It depends on thiamine diphosphate as a cofactor.

It catalyses the reaction D-glyceraldehyde 3-phosphate + pyruvate + H(+) = 1-deoxy-D-xylulose 5-phosphate + CO2. The protein operates within metabolic intermediate biosynthesis; 1-deoxy-D-xylulose 5-phosphate biosynthesis; 1-deoxy-D-xylulose 5-phosphate from D-glyceraldehyde 3-phosphate and pyruvate: step 1/1. Its function is as follows. Catalyzes the acyloin condensation reaction between C atoms 2 and 3 of pyruvate and glyceraldehyde 3-phosphate to yield 1-deoxy-D-xylulose-5-phosphate (DXP). The protein is 1-deoxy-D-xylulose-5-phosphate synthase of Clostridium perfringens (strain SM101 / Type A).